Consider the following 397-residue polypeptide: Glutamate 5-kinase (397 aa).

The interval 1-28 (MVADLTSDISESQEQETETNSANNNGAV) is disordered. Lysine 40 is an ATP binding site. Substrate contacts are provided by serine 80, aspartate 168, and asparagine 180. Residues 200–201 (SD) and 243–249 (SGGMASK) each bind ATP. A PUA domain is found at 306–383 (HGQVYIDQGA…QEIADILGYE (78 aa)).

It belongs to the glutamate 5-kinase family.

It is found in the cytoplasm. The catalysed reaction is L-glutamate + ATP = L-glutamyl 5-phosphate + ADP. It functions in the pathway amino-acid biosynthesis; L-proline biosynthesis; L-glutamate 5-semialdehyde from L-glutamate: step 1/2. In terms of biological role, catalyzes the transfer of a phosphate group to glutamate to form L-glutamate 5-phosphate. The sequence is that of Glutamate 5-kinase from Zymomonas mobilis subsp. mobilis (strain ATCC 31821 / ZM4 / CP4).